A 240-amino-acid polypeptide reads, in one-letter code: 2-C-methyl-D-erythritol 4-phosphate cytidylyltransferase (240 aa).

The protein belongs to the IspD/TarI cytidylyltransferase family. IspD subfamily.

The enzyme catalyses 2-C-methyl-D-erythritol 4-phosphate + CTP + H(+) = 4-CDP-2-C-methyl-D-erythritol + diphosphate. Its pathway is isoprenoid biosynthesis; isopentenyl diphosphate biosynthesis via DXP pathway; isopentenyl diphosphate from 1-deoxy-D-xylulose 5-phosphate: step 2/6. In terms of biological role, catalyzes the formation of 4-diphosphocytidyl-2-C-methyl-D-erythritol from CTP and 2-C-methyl-D-erythritol 4-phosphate (MEP). This Chlorobium luteolum (strain DSM 273 / BCRC 81028 / 2530) (Pelodictyon luteolum) protein is 2-C-methyl-D-erythritol 4-phosphate cytidylyltransferase.